The following is a 292-amino-acid chain: Elongation factor Ts (292 aa).

The tract at residues 81 to 84 (TDFV) is involved in Mg(2+) ion dislocation from EF-Tu.

Belongs to the EF-Ts family.

The protein resides in the cytoplasm. In terms of biological role, associates with the EF-Tu.GDP complex and induces the exchange of GDP to GTP. It remains bound to the aminoacyl-tRNA.EF-Tu.GTP complex up to the GTP hydrolysis stage on the ribosome. The sequence is that of Elongation factor Ts from Alkalilimnicola ehrlichii (strain ATCC BAA-1101 / DSM 17681 / MLHE-1).